Here is a 121-residue protein sequence, read N- to C-terminus: MISRVTEALSKVKGSMGSHERHALPGVIGDDLLRFGKLPLCLFICIILTAVTVVTTAHHTRLLTAQREQLVLERDALDIEWRNLILEENALGDHSRVERIATEKLQMQHVDPSQENIVVQK.

Residues 1 to 34 (MISRVTEALSKVKGSMGSHERHALPGVIGDDLLR) lie on the Cytoplasmic side of the membrane. Residues 35-57 (FGKLPLCLFICIILTAVTVVTTA) form a helical membrane-spanning segment. Over 58-121 (HHTRLLTAQR…PSQENIVVQK (64 aa)) the chain is Periplasmic.

This sequence belongs to the FtsL family. In terms of assembly, part of a complex composed of FtsB, FtsL and FtsQ.

Its subcellular location is the cell inner membrane. Functionally, essential cell division protein. May link together the upstream cell division proteins, which are predominantly cytoplasmic, with the downstream cell division proteins, which are predominantly periplasmic. This is Cell division protein FtsL from Shigella dysenteriae serotype 1 (strain Sd197).